Here is a 450-residue protein sequence, read N- to C-terminus: UDP-N-acetylmuramoylalanine--D-glutamate ligase (450 aa).

119 to 125 (GSNGKTT) serves as a coordination point for ATP.

The protein belongs to the MurCDEF family.

It localises to the cytoplasm. The enzyme catalyses UDP-N-acetyl-alpha-D-muramoyl-L-alanine + D-glutamate + ATP = UDP-N-acetyl-alpha-D-muramoyl-L-alanyl-D-glutamate + ADP + phosphate + H(+). The protein operates within cell wall biogenesis; peptidoglycan biosynthesis. Cell wall formation. Catalyzes the addition of glutamate to the nucleotide precursor UDP-N-acetylmuramoyl-L-alanine (UMA). This is UDP-N-acetylmuramoylalanine--D-glutamate ligase from Streptococcus pneumoniae (strain Taiwan19F-14).